Reading from the N-terminus, the 352-residue chain is UDP-N-acetylglucosamine--N-acetylmuramyl-(pentapeptide) pyrophosphoryl-undecaprenol N-acetylglucosamine transferase (352 aa).

2 residues coordinate UDP-N-acetyl-alpha-D-glucosamine: S195 and Q287.

The protein belongs to the glycosyltransferase 28 family. MurG subfamily.

It localises to the cell membrane. The catalysed reaction is Mur2Ac(oyl-L-Ala-gamma-D-Glu-L-Lys-D-Ala-D-Ala)-di-trans,octa-cis-undecaprenyl diphosphate + UDP-N-acetyl-alpha-D-glucosamine = beta-D-GlcNAc-(1-&gt;4)-Mur2Ac(oyl-L-Ala-gamma-D-Glu-L-Lys-D-Ala-D-Ala)-di-trans,octa-cis-undecaprenyl diphosphate + UDP + H(+). The protein operates within cell wall biogenesis; peptidoglycan biosynthesis. Its function is as follows. Cell wall formation. Catalyzes the transfer of a GlcNAc subunit on undecaprenyl-pyrophosphoryl-MurNAc-pentapeptide (lipid intermediate I) to form undecaprenyl-pyrophosphoryl-MurNAc-(pentapeptide)GlcNAc (lipid intermediate II). The sequence is that of UDP-N-acetylglucosamine--N-acetylmuramyl-(pentapeptide) pyrophosphoryl-undecaprenol N-acetylglucosamine transferase from Streptococcus pneumoniae (strain JJA).